A 447-amino-acid polypeptide reads, in one-letter code: Protein disulfide-isomerase like 2-2 (447 aa).

Positions 1–26 (MERKMYKSTVFPICCLLFALFDRGNA) are cleaved as a signal peptide. Thioredoxin domains follow at residues 27 to 139 (LYGS…QIKA) and 161 to 275 (KKKS…QLES). Active-site nucleophile residues include C62 and C65. A disulfide bridge links C62 with C65. Residues 146–170 (DGKTSGTKNGGGSSEKKKSEPSASV) form a disordered region. A glycan (N-linked (GlcNAc...) asparagine) is linked at N173. Catalysis depends on nucleophile residues C197 and C200. A disulfide bridge connects residues C197 and C200. Positions 444–447 (KDDL) match the Prevents secretion from ER motif.

The protein belongs to the protein disulfide isomerase family. As to expression, widely expressed.

It is found in the endoplasmic reticulum lumen. It catalyses the reaction Catalyzes the rearrangement of -S-S- bonds in proteins.. Acts as a protein-folding catalyst that interacts with nascent polypeptides to catalyze the formation, isomerization, and reduction or oxidation of disulfide bonds. This chain is Protein disulfide-isomerase like 2-2 (PDIL2-2), found in Arabidopsis thaliana (Mouse-ear cress).